A 941-amino-acid chain; its full sequence is MutS protein homolog 1 (941 aa).

Residue 747-754 (GPNMAGKS) participates in ATP binding.

The protein belongs to the DNA mismatch repair MutS family.

The protein resides in the cytoplasm. The protein localises to the mitochondrion. Involved in mitochondrial DNA repair. The chain is MutS protein homolog 1 (msh1) from Schizosaccharomyces pombe (strain 972 / ATCC 24843) (Fission yeast).